The following is a 115-amino-acid chain: NADH-ubiquinone oxidoreductase chain 3 (115 aa).

A run of 3 helical transmembrane segments spans residues 3 to 23, 55 to 75, and 86 to 106; these read LLII…IAFW, FFLV…LLPL, and TMMA…SYEW.

Belongs to the complex I subunit 3 family. Core subunit of respiratory chain NADH dehydrogenase (Complex I) which is composed of 45 different subunits. Interacts with TMEM186. Interacts with TMEM242.

It localises to the mitochondrion inner membrane. The catalysed reaction is a ubiquinone + NADH + 5 H(+)(in) = a ubiquinol + NAD(+) + 4 H(+)(out). Functionally, core subunit of the mitochondrial membrane respiratory chain NADH dehydrogenase (Complex I) which catalyzes electron transfer from NADH through the respiratory chain, using ubiquinone as an electron acceptor. Essential for the catalytic activity of complex I. The polypeptide is NADH-ubiquinone oxidoreductase chain 3 (Rattus norvegicus (Rat)).